Consider the following 133-residue polypeptide: Phosphoribosyl-AMP cyclohydrolase (133 aa).

Asp-77 contacts Mg(2+). Cys-78 contacts Zn(2+). 2 residues coordinate Mg(2+): Asp-79 and Asp-81. Residues Cys-95 and Cys-102 each contribute to the Zn(2+) site.

The protein belongs to the PRA-CH family. As to quaternary structure, homodimer. It depends on Mg(2+) as a cofactor. Zn(2+) is required as a cofactor.

It is found in the cytoplasm. The catalysed reaction is 1-(5-phospho-beta-D-ribosyl)-5'-AMP + H2O = 1-(5-phospho-beta-D-ribosyl)-5-[(5-phospho-beta-D-ribosylamino)methylideneamino]imidazole-4-carboxamide. It participates in amino-acid biosynthesis; L-histidine biosynthesis; L-histidine from 5-phospho-alpha-D-ribose 1-diphosphate: step 3/9. Catalyzes the hydrolysis of the adenine ring of phosphoribosyl-AMP. The sequence is that of Phosphoribosyl-AMP cyclohydrolase from Pseudomonas fluorescens (strain Pf0-1).